The sequence spans 124 residues: Acidic phospholipase A2 (124 aa).

Disulfide bonds link Cys-26/Cys-116, Cys-28/Cys-44, Cys-43/Cys-95, Cys-49/Cys-124, Cys-50/Cys-88, Cys-57/Cys-81, and Cys-75/Cys-86. Positions 27, 29, and 31 each coordinate Ca(2+). Residue His-47 is part of the active site. A Ca(2+)-binding site is contributed by Asp-48. Asp-89 is a catalytic residue.

This sequence belongs to the phospholipase A2 family. Group II subfamily. D49 sub-subfamily. Requires Ca(2+) as cofactor. Expressed by the venom gland.

It localises to the secreted. The catalysed reaction is a 1,2-diacyl-sn-glycero-3-phosphocholine + H2O = a 1-acyl-sn-glycero-3-phosphocholine + a fatty acid + H(+). In terms of biological role, snake venom phospholipase A2 (PLA2) that inhibits ADP-induced platelet aggregation. PLA2 catalyzes the calcium-dependent hydrolysis of the 2-acyl groups in 3-sn-phosphoglycerides. The polypeptide is Acidic phospholipase A2 (Gloydius ussuriensis (Ussuri mamushi)).